Reading from the N-terminus, the 169-residue chain is Photosystem I assembly protein Ycf3 (169 aa).

3 TPR repeats span residues 35–68 (AFSY…EIDP), 72–105 (SYIL…NPAL), and 120–153 (GEQA…APSN).

The protein belongs to the Ycf3 family.

The protein resides in the plastid. Its subcellular location is the chloroplast thylakoid membrane. In terms of biological role, essential for the assembly of the photosystem I (PSI) complex. May act as a chaperone-like factor to guide the assembly of the PSI subunits. This is Photosystem I assembly protein Ycf3 from Chaetosphaeridium globosum (Charophycean green alga).